We begin with the raw amino-acid sequence, 304 residues long: ATP phosphoribosyltransferase (304 aa).

This sequence belongs to the ATP phosphoribosyltransferase family.

The protein resides in the cytoplasm. It carries out the reaction 1-(5-phospho-beta-D-ribosyl)-ATP + diphosphate = 5-phospho-alpha-D-ribose 1-diphosphate + ATP. It functions in the pathway amino-acid biosynthesis; L-histidine biosynthesis; L-histidine from 5-phospho-alpha-D-ribose 1-diphosphate: step 1/9. In terms of biological role, catalyzes the condensation of ATP and 5-phosphoribose 1-diphosphate to form N'-(5'-phosphoribosyl)-ATP (PR-ATP). Has a crucial role in the pathway because the rate of histidine biosynthesis seems to be controlled primarily by regulation of the enzymatic activity. In Debaryomyces hansenii (strain ATCC 36239 / CBS 767 / BCRC 21394 / JCM 1990 / NBRC 0083 / IGC 2968) (Yeast), this protein is ATP phosphoribosyltransferase (HIS1).